Here is a 148-residue protein sequence, read N- to C-terminus: CDC25-like phosphatase YCH1 (148 aa).

Position 1 is an N-acetylmethionine (Met1). The region spanning Leu29–Ser137 is the Rhodanese domain.

Belongs to the MPI phosphatase family.

It localises to the cytoplasm. The protein localises to the nucleus. Protein phosphatase. In Saccharomyces cerevisiae (strain ATCC 204508 / S288c) (Baker's yeast), this protein is CDC25-like phosphatase YCH1 (YCH1).